The primary structure comprises 359 residues: Norspermidine sensor (359 aa).

The N-terminal stretch at 1 to 33 is a signal peptide; it reads MTNFCNEWVSYSQMIKRFLSLMVLNTVCYQASA.

The protein belongs to the bacterial solute-binding protein PotD/PotF family.

The protein resides in the periplasm. In terms of biological role, acts as a sensor of norspermidine and enhances biofilm formation. When complexed to norspermidine, could interact with the periplasmic portion of MbaA to regulate its enzymatic activity. This chain is Norspermidine sensor (nspS), found in Vibrio cholerae serotype O1 (strain ATCC 39315 / El Tor Inaba N16961).